The sequence spans 33 residues: GFFLNALKNFAKTAGKRLKSLLNHASCKLSGQC.

Cys-27 and Cys-33 form a disulfide bridge.

Expressed by the skin glands.

The protein localises to the secreted. Functionally, antimicrobial peptide active against E.coli (MIC=5 uM), K.pneumoniae (MIC=10 uM), B.cereus (MIC=7 uM) and S.aureus (MIC=12 uM). Has very little hemolytic activity. The sequence is that of Cyanophlyctin-beta from Euphlyctis cyanophlyctis (Skittering frog).